Here is a 231-residue protein sequence, read N- to C-terminus: 7-cyano-7-deazaguanine synthase (231 aa).

Position 8–18 (8–18) interacts with ATP; it reads FSGGQDSTTCL. 4 residues coordinate Zn(2+): C188, C197, C200, and C203.

The protein belongs to the QueC family. Zn(2+) is required as a cofactor.

It catalyses the reaction 7-carboxy-7-deazaguanine + NH4(+) + ATP = 7-cyano-7-deazaguanine + ADP + phosphate + H2O + H(+). The protein operates within purine metabolism; 7-cyano-7-deazaguanine biosynthesis. Functionally, catalyzes the ATP-dependent conversion of 7-carboxy-7-deazaguanine (CDG) to 7-cyano-7-deazaguanine (preQ(0)). The protein is 7-cyano-7-deazaguanine synthase of Salmonella choleraesuis (strain SC-B67).